Here is a 489-residue protein sequence, read N- to C-terminus: Protein K15 (489 aa).

The signal sequence occupies residues 1–26 (MKTLIFFWNLWLWALLVCFWCITLVC). The next 11 helical transmembrane spans lie at 29 to 49 (TNSIDTMASLLVMCILFVSAI), 63 to 83 (WPSSWHLGIIACIVLKLWNLS), 89 to 109 (TYACLITTAILSLVTAFLTLI), 121 to 141 (HGILFTSTFAVLMTNMLVHMS), 148 to 168 (WIFFPISFTLSLPFLYAFATV), 175 to 195 (LVSSVSFICAGLVMGYPVSCC), 200 to 220 (CTATAAGLSLSSIYLGFTGII), 237 to 257 (FLLLQGGVLTTQTLTTELLAI), 264 to 284 (IKGHEILLLVCLIFLWCLYVW), 296 to 316 (MLHLIAAWSHTGGCVQLVMLL), and 324 to 344 (ILTMIICISTLFSTLQGLLVF).

As to quaternary structure, interacts with host LYN; this interaction modulates B-cells signaling. Interacts with host ITSN2.

Its subcellular location is the host cell membrane. It localises to the host Golgi apparatus. The protein localises to the host trans-Golgi network. Plays a crucial role for reactivation of the virus from latency, early viral gene expression and virus production. Modulates host signaling pathways including activation of MAP kinases c-JUN-N-terminal kinase (JNK), ERK2, and NF-kappa-B resulting in the activation of AP-1 and NFAT-dependent gene expression in B-lymphocytes. When expressed in epithelial cells, induces the expression of several inflammatory and angiogenic genes. Also interferes with B-lymphocytes signaling through interaction with host LYN kinase. The polypeptide is Protein K15 (K15) (Human herpesvirus 8 type P (isolate GK18) (HHV-8)).